The sequence spans 263 residues: 3-methyl-2-oxobutanoate hydroxymethyltransferase (263 aa).

Residues Asp45 and Asp84 each contribute to the Mg(2+) site. Residues 45–46 (DS), Asp84, and Lys112 contribute to the 3-methyl-2-oxobutanoate site. Glu114 provides a ligand contact to Mg(2+). The active-site Proton acceptor is Glu180.

It belongs to the PanB family. Homodecamer; pentamer of dimers. Requires Mg(2+) as cofactor.

The protein localises to the cytoplasm. It carries out the reaction 3-methyl-2-oxobutanoate + (6R)-5,10-methylene-5,6,7,8-tetrahydrofolate + H2O = 2-dehydropantoate + (6S)-5,6,7,8-tetrahydrofolate. It functions in the pathway cofactor biosynthesis; (R)-pantothenate biosynthesis; (R)-pantoate from 3-methyl-2-oxobutanoate: step 1/2. Catalyzes the reversible reaction in which hydroxymethyl group from 5,10-methylenetetrahydrofolate is transferred onto alpha-ketoisovalerate to form ketopantoate. This Enterobacter sp. (strain 638) protein is 3-methyl-2-oxobutanoate hydroxymethyltransferase.